Here is a 317-residue protein sequence, read N- to C-terminus: Ribosomal protein L11 methyltransferase (317 aa).

S-adenosyl-L-methionine-binding residues include T158, G179, D201, and N244.

The protein belongs to the methyltransferase superfamily. PrmA family.

The protein resides in the cytoplasm. The enzyme catalyses L-lysyl-[protein] + 3 S-adenosyl-L-methionine = N(6),N(6),N(6)-trimethyl-L-lysyl-[protein] + 3 S-adenosyl-L-homocysteine + 3 H(+). Its function is as follows. Methylates ribosomal protein L11. The protein is Ribosomal protein L11 methyltransferase of Streptococcus pyogenes serotype M6 (strain ATCC BAA-946 / MGAS10394).